A 1455-amino-acid chain; its full sequence is Membrane-associated guanylate kinase, WW and PDZ domain-containing protein 2 (1455 aa).

A PDZ 1 domain is found at 17-101 (ESVIGRNPEG…PLRLKCVKQG (85 aa)). The Guanylate kinase-like domain occupies 109-283 (RHYLNLRFQK…APVYSQPEEL (175 aa)). The tract at residues 205-306 (PGATPSAEGK…DNEEPDPLPD (102 aa)) is disordered. Residues 241-252 (VVNGNGVVVTPE) show a composition bias toward low complexity. A compositionally biased stretch (basic and acidic residues) spans 281-296 (EELKEQMDDTKPTKPE). 2 WW domains span residues 302 to 335 (DPLP…DPRL) and 348 to 381 (NELP…NPVL). An interaction with DDN region spans residues 302–381 (DPLPDNWEMA…RRTQFENPVL (80 aa)). Residue Tyr-362 is modified to Phosphotyrosine. PDZ domains lie at 426-510 (STTL…CRGY) and 605-683 (TLTI…HRGG). Ser-686 is subject to Phosphoserine. The PDZ 4 domain occupies 778 to 860 (DVHLRRMESG…NGQVNLTVRR (83 aa)). Position 827 is a phosphotyrosine (Tyr-827). The tract at residues 869 to 913 (CPENGRSPGSVSTHHSSPRSDYATYTNSNHAAPSSNASPPEGFAS) is disordered. 2 positions are modified to phosphoserine: Ser-884 and Ser-885. Residues 895 to 908 (NSNHAAPSSNASPP) are compositionally biased toward low complexity. The PDZ 5 domain maps to 920 to 1010 (DVVIHRKENE…SVTLRIIPQE (91 aa)). Polar residues predominate over residues 1011–1040 (ELNSPTSAPSSEKQSPMAQQSPLAQQSPLA). The tract at residues 1011-1136 (ELNSPTSAPS…PDTRQYPLSD (126 aa)) is disordered. Ser-1014 carries the phosphoserine modification. The span at 1067–1083 (NSYRSEVKARQDVKPDI) shows a compositional bias: basic and acidic residues. Positions 1147–1229 (TVDMEKGAKG…RVRLLLKRGT (83 aa)) constitute a PDZ 6 domain. The tract at residues 1231 to 1455 (QVPEYDEPAP…LKPGASAASR (225 aa)) is disordered. A compositionally biased stretch (low complexity) spans 1238–1249 (PAPWSSPAAAAP). Basic and acidic residues predominate over residues 1287-1299 (DIKREHDVRKPKE). Composition is skewed to low complexity over residues 1346 to 1363 (EARA…AARA), 1399 to 1412 (ALEA…RAGP), and 1422 to 1433 (APARKAAVAPGP).

It belongs to the MAGUK family. Interacts (via its WW domains) with DRPLA. Interacts (via its second PDZ domain) with PTEN (via unphosphorylated C-terminus); this interaction diminishes the degradation rate of PTEN. Interacts (via guanylate kinase domain) with DLGAP1. Interacts (via the PDZ domains) with GRIN2A, GRID2 and NLGN1. Interacts with CTNND2, CTNNB1, MAGUIN-1, ACVR2A, SMAD2 and SMAD3. Part of a complex consisting of MAGI2/ARIP1, ACVR2A, ACVR1B and SMAD3. May interact with HTR2A. Interacts with IGSF9, RAPGEF2 and HTR4. Identified in a complex with ACTN4, CASK, IQGAP1, NPHS1, SPTAN1 and SPTBN1. Found in a complex, at least composed of KIDINS220, MAGI2, NTRK1 and RAPGEF2; the complex is mainly formed at late endosomes in a NGF-dependent manner. Interacts with RAPGEF2; the interaction occurs before or after nerve growth factor (NGF) stimulation. Interacts (via PDZ domain) with KIDINS220 (via C-terminal domain). Interacts with DDN. Interacts with DLL1. Found in a complex with IGSF9B and NLGN2; the interaction with IGSF9B is mediated via the PDZ 5 and PDZ 6 domains, while the interaction with NLGN2 is mediated via the WW1, WW2 and PDZ2 domains. Interacts (via PDZ 6 domain) with USH1G (via SAM domain); the interaction is triggered by phosphorylation of USH1G by CK2 and negatively regulates MAGI2-mediated endocytosis. As to expression, specifically expressed in brain.

The protein resides in the cytoplasm. Its subcellular location is the late endosome. It is found in the synapse. The protein localises to the synaptosome. It localises to the cell membrane. The protein resides in the cytoskeleton. Its subcellular location is the microtubule organizing center. It is found in the centrosome. The protein localises to the cell projection. It localises to the cilium. The protein resides in the centriole. Its subcellular location is the photoreceptor inner segment. It is found in the photoreceptor outer segment. Its function is as follows. Seems to act as a scaffold molecule at synaptic junctions by assembling neurotransmitter receptors and cell adhesion proteins. Plays a role in nerve growth factor (NGF)-induced recruitment of RAPGEF2 to late endosomes and neurite outgrowth. May play a role in regulating activin-mediated signaling in neuronal cells. Enhances the ability of PTEN to suppress AKT1 activation. Plays a role in receptor-mediated clathrin-dependent endocytosis which is required for ciliogenesis. The protein is Membrane-associated guanylate kinase, WW and PDZ domain-containing protein 2 (MAGI2) of Homo sapiens (Human).